The sequence spans 297 residues: DNA processing protein DprA (297 aa).

Belongs to the DprA/Smf family. Interacts with RecA. Interacts with ComFA and ComFC.

Its subcellular location is the cytoplasm. Its function is as follows. Protein that helps load RecA onto ssDNA during transformation. Binds cooperatively to circular ssDNA, is able to bridge different segments of DNA. Favors the loading of RecA onto SsbA- or SsbB-coated ssDNA and formation of RecA-DNA filaments. RecA-ATP cannot catalyze homologous DNA strand exchange; SsbA and DprA activate strand exchange by RecA-ATP. The sequence is that of DNA processing protein DprA from Bacillus subtilis (strain 168).